A 1183-amino-acid chain; its full sequence is MAGQVVQYGRHRKRRNYARISEVLELPNLIEIQTKSYEWFLREGLIEMFRDISPIEDFTGNLSLEFVDYRLGEPKYDLEESKNRDATYAAPLRVKVRLIIKETGEVKEQEVFMGDFPLMTDTGTFVINGAERVIVSQLVRSPSVYFNEKIDKNGRENYDATIIPNRGAWLEYETDAKDVVYVRIDRTRKLPLTVLLRALGFSSDQEIVDLLGDNEYLRNTLEKDGTENTEQALLEIYERLRPGEPPTVENAKSLLYSRFFDPKRYDLASVGRYKTNKKLHLKHRLFNQKLAEPIVNTETGEIVVEEGTVLDRRKIDEIMDVLESNANSEVFELHGSVIDEPVEIQSIKVYVPNDDEGRTTTVIGNAFPDSEVKCITPADIIASMSYFFNLLSGIGYTDDIDHLGNRRLRSVGELLQNQFRIGLSRMERVVRERMSIQDTESITPQQLINIRPVIASIKEFFGSSQLSQFMDQANPLAELTYKRRLSALGPGGLTRERAQMEVRDVHYSHYGRMCPIETPEGPNIGLINSLSSYARVNEFGFIETPYRKVDLDTHAITDQIDYLTADEEDSYVVAQANSKLDENGRFMDDEVVCRFRGNNTVMAKEKMDYMDVSPKQVVSAATACIPFLENDDSNRALMGANMQRQAVPLMNPEAPFVGTGMEHVAARDSGAAITAKHRGRVEHVESNEILVRRLVEENGVEHEGELDRYPLAKFKRSNSGTCYNQRPIVAVGDVVEYNEILADGPSMELGEMALGRNVVVGFMTWDGYNYEDAVIMSERLVKDDVYTSIHIEEYESEARDTKLGPEEITRDIPNVSESALKNLDDRGIVYIGAEVKDGDILVGKVTPKGVTELTAEERLLHAIFGEKAREVRDTSLRVPHGAGGIVLDVKVFNREEGDDTLSPGVNQLVRVYIVQKRKIHVGDKMCGRHGNKGVISKIVPEEDMPYLPDGRPIDIMLNPLGVPSRMNIGQVLELHLGMAAKNLGIHVASPVFDGANDDDVWSTIEEAGMARDGKTVLYDGRTGEPFDNRISVGVMYMLKLAHMVDDKLHARSTGPYSLVTQQPLGGKAQFGGQRFGEMEVWALEAYGAAYTLQEILTYKSDDTVGRVKTYEAIVKGENISRPSVPESFRVLMKELQSLGLDVKVMDEQDNEIEMTDVDDDDVVERKVDLQQNDAPETQKEVTD.

Belongs to the RNA polymerase beta chain family. In terms of assembly, the RNAP catalytic core consists of 2 alpha, 1 beta, 1 beta' and 1 omega subunit. When a sigma factor is associated with the core the holoenzyme is formed, which can initiate transcription.

The catalysed reaction is RNA(n) + a ribonucleoside 5'-triphosphate = RNA(n+1) + diphosphate. Functionally, DNA-dependent RNA polymerase catalyzes the transcription of DNA into RNA using the four ribonucleoside triphosphates as substrates. This Staphylococcus aureus (strain Mu50 / ATCC 700699) protein is DNA-directed RNA polymerase subunit beta.